A 407-amino-acid chain; its full sequence is Argininosuccinate synthase (407 aa).

ATP contacts are provided by residues 16 to 24 (AYSGGLDTS) and Ala44. L-citrulline-binding residues include Tyr96 and Ser101. Gly126 is a binding site for ATP. Residues Thr128, Asn132, and Asp133 each coordinate L-aspartate. Residue Asn132 participates in L-citrulline binding. Positions 136, 185, 194, 270, and 282 each coordinate L-citrulline.

The protein belongs to the argininosuccinate synthase family. Type 1 subfamily. As to quaternary structure, homotetramer.

The protein resides in the cytoplasm. It carries out the reaction L-citrulline + L-aspartate + ATP = 2-(N(omega)-L-arginino)succinate + AMP + diphosphate + H(+). Its pathway is amino-acid biosynthesis; L-arginine biosynthesis; L-arginine from L-ornithine and carbamoyl phosphate: step 2/3. The polypeptide is Argininosuccinate synthase (Shewanella frigidimarina (strain NCIMB 400)).